The sequence spans 247 residues: Pyridoxine 5'-phosphate synthase (247 aa).

Asn7 contacts 3-amino-2-oxopropyl phosphate. 9–10 provides a ligand contact to 1-deoxy-D-xylulose 5-phosphate; sequence DH. Arg18 contacts 3-amino-2-oxopropyl phosphate. His43 serves as the catalytic Proton acceptor. Positions 45 and 50 each coordinate 1-deoxy-D-xylulose 5-phosphate. Residue Glu70 is the Proton acceptor of the active site. Residue Thr100 participates in 1-deoxy-D-xylulose 5-phosphate binding. His190 acts as the Proton donor in catalysis. Residues Gly191 and 212–213 each bind 3-amino-2-oxopropyl phosphate; that span reads GH.

This sequence belongs to the PNP synthase family. Homooctamer; tetramer of dimers.

It localises to the cytoplasm. The enzyme catalyses 3-amino-2-oxopropyl phosphate + 1-deoxy-D-xylulose 5-phosphate = pyridoxine 5'-phosphate + phosphate + 2 H2O + H(+). It functions in the pathway cofactor biosynthesis; pyridoxine 5'-phosphate biosynthesis; pyridoxine 5'-phosphate from D-erythrose 4-phosphate: step 5/5. In terms of biological role, catalyzes the complicated ring closure reaction between the two acyclic compounds 1-deoxy-D-xylulose-5-phosphate (DXP) and 3-amino-2-oxopropyl phosphate (1-amino-acetone-3-phosphate or AAP) to form pyridoxine 5'-phosphate (PNP) and inorganic phosphate. This chain is Pyridoxine 5'-phosphate synthase, found in Synechococcus sp. (strain WH7803).